Consider the following 1170-residue polypeptide: Cellulose synthase-like protein D2 (1170 aa).

Disordered regions lie at residues 1 to 75 (MASN…PESG) and 269 to 295 (NEVD…EFTS). Residues 10 to 24 (RHSNSSRLSRMSYSG) show a composition bias toward low complexity. Over residues 273 to 288 (NGGGGGGGGGLGGGDG) the composition is skewed to gly residues. A run of 2 helical transmembrane segments spans residues 311–331 (VLSP…LFLA) and 341–361 (AMWL…SWLL). Asp441 is an active-site residue. Positions 527–551 (HAREEIKAMKRQREAALDDVVEAVK) form a coiled coil. Asp873 is a catalytic residue. 6 consecutive transmembrane segments (helical) span residues 955 to 975 (IFLI…QFIV), 981 to 1001 (TFLT…VLEI), 1027 to 1047 (LAAV…SFTL), 1070 to 1090 (SLMI…AVGF), 1104 to 1124 (LLGG…FAKG), and 1134 to 1154 (TIVF…WVAI).

The protein belongs to the glycosyltransferase 2 family. Plant cellulose synthase-like D subfamily.

It is found in the golgi apparatus membrane. Its function is as follows. Thought to be a Golgi-localized beta-glycan synthase that polymerize the backbones of noncellulosic polysaccharides (hemicelluloses) of plant cell wall. This Oryza sativa subsp. indica (Rice) protein is Cellulose synthase-like protein D2 (CSLD2).